Consider the following 138-residue polypeptide: Large ribosomal subunit protein bL17 (138 aa).

Belongs to the bacterial ribosomal protein bL17 family. Part of the 50S ribosomal subunit. Contacts protein L32.

The sequence is that of Large ribosomal subunit protein bL17 from Nitrobacter hamburgensis (strain DSM 10229 / NCIMB 13809 / X14).